The following is a 358-amino-acid chain: Chorismate synthase (358 aa).

Residue Arg-46 participates in NADP(+) binding. Residues 123-125 (RSS), 235-236 (NA), Gly-275, 290-294 (KATPS), and Arg-316 contribute to the FMN site.

It belongs to the chorismate synthase family. As to quaternary structure, homotetramer. The cofactor is FMNH2.

It catalyses the reaction 5-O-(1-carboxyvinyl)-3-phosphoshikimate = chorismate + phosphate. Its pathway is metabolic intermediate biosynthesis; chorismate biosynthesis; chorismate from D-erythrose 4-phosphate and phosphoenolpyruvate: step 7/7. In terms of biological role, catalyzes the anti-1,4-elimination of the C-3 phosphate and the C-6 proR hydrogen from 5-enolpyruvylshikimate-3-phosphate (EPSP) to yield chorismate, which is the branch point compound that serves as the starting substrate for the three terminal pathways of aromatic amino acid biosynthesis. This reaction introduces a second double bond into the aromatic ring system. The chain is Chorismate synthase from Aliarcobacter butzleri (strain RM4018) (Arcobacter butzleri).